Consider the following 121-residue polypeptide: Basic phospholipase A2 homolog BnSP-7 (121 aa).

Disulfide bonds link C26–C115, C28–C44, C43–C95, C49–C121, C50–C88, C57–C81, and C75–C86. Residues 105–117 (KKYRYHLKPFCKK) are important for membrane-damaging activities in eukaryotes and bacteria; heparin-binding.

It belongs to the phospholipase A2 family. Group II subfamily. K49 sub-subfamily. In terms of assembly, homodimer; non-covalently linked (probable alternative/compact dimer conformation in solution). Expressed by the venom gland.

It localises to the secreted. Its activity is regulated as follows. Heparin inhibits the neuromuscular effect, myotoxin activity and edema-inducing effects. Bromophenacyl bromide (BPB) inhibits the neuromuscular effect, the myotoxin activity and edema-inducing effects. Functionally, snake venom phospholipase A2 (PLA2) that lacks enzymatic activity. Is myotoxic and displays edema-inducing activity. Displays bactericidal activity and promotes the blockage of the neuromuscular contraction of the chick biventer cervicis muscle. Also disrupts artificial membranes, and provokes tissue damages characterized by edema, necrosis and inflammation. May act as pro-inflammatory mediators, inducing metalloproteinase and cytokine production from the inflammatory and satellite cells. A model of myotoxic mechanism has been proposed: an apo Lys49-PLA2 is activated by the entrance of a hydrophobic molecule (e.g. fatty acid) at the hydrophobic channel of the protein leading to a reorientation of a monomer. This reorientation causes a transition between 'inactive' to 'active' states, causing alignment of C-terminal and membrane-docking sites (MDoS) side-by-side and putting the membrane-disruption sites (MDiS) in the same plane, exposed to solvent and in a symmetric position for both monomers. The MDoS region stabilizes the toxin on membrane by the interaction of charged residues with phospholipid head groups. Subsequently, the MDiS region destabilizes the membrane with penetration of hydrophobic residues. This insertion causes a disorganization of the membrane, allowing an uncontrolled influx of ions (i.e. calcium and sodium), and eventually triggering irreversible intracellular alterations and cell death. The polypeptide is Basic phospholipase A2 homolog BnSP-7 (Bothrops pauloensis (Neuwied's lancehead)).